Consider the following 156-residue polypeptide: Small ribosomal subunit protein uS7 (156 aa).

It belongs to the universal ribosomal protein uS7 family. In terms of assembly, part of the 30S ribosomal subunit. Contacts proteins S9 and S11.

Functionally, one of the primary rRNA binding proteins, it binds directly to 16S rRNA where it nucleates assembly of the head domain of the 30S subunit. Is located at the subunit interface close to the decoding center, probably blocks exit of the E-site tRNA. This chain is Small ribosomal subunit protein uS7, found in Shigella dysenteriae serotype 1 (strain Sd197).